Consider the following 1025-residue polypeptide: Multidrug resistance protein MdtC (1025 aa).

Transmembrane regions (helical) follow at residues 3–23 (FFAL…AITL), 333–353 (EVEQ…FLFL), 360–380 (IIPA…MYLC), 387–407 (LSLM…IVVL), 431–451 (VGFT…PLLL), 463–483 (FAVT…TLTP), 528–548 (LVGV…ISIP), 853–873 (VILI…LYES), 875–895 (VHPL…LLAL), 897–917 (LFNA…IGIV), 953–973 (PIMM…LSGG), and 984–1004 (ITIV…TPVV).

It belongs to the resistance-nodulation-cell division (RND) (TC 2.A.6) family. MdtC subfamily. As to quaternary structure, part of a tripartite efflux system composed of MdtA, MdtB and MdtC. MdtC forms a heteromultimer with MdtB.

The protein localises to the cell inner membrane. In terms of biological role, the MdtABC tripartite complex confers resistance against novobiocin and deoxycholate. The polypeptide is Multidrug resistance protein MdtC (Escherichia coli O1:K1 / APEC).